The primary structure comprises 641 residues: Bifunctional protein glk (641 aa).

The interval 1-21 (MSTGAQTKAAEASQHADGPRL) is disordered. A glucokinase region spans residues 1–340 (MSTGAQTKAA…QLSNRTGGAS (340 aa)). Residue 23 to 28 (ADVGGT) coordinates ATP. In terms of domain architecture, HTH rpiR-type spans 341–417 (SAVFERIRQM…LKLATGLTGT (77 aa)). The segment at 341 to 641 (SAVFERIRQM…SHGAAPAAKE (301 aa)) is putative HTH-type transcriptional regulator. The H-T-H motif DNA-binding region spans 377 to 396 (IVDIARKADVSQPTVIRFCR). The 140-residue stretch at 461–600 (AIDILNNARR…AVGVAIRRAS (140 aa)) folds into the SIS domain. A helical transmembrane segment spans residues 576–596 (SMISRILHLVMIDILAVGVAI).

In the N-terminal section; belongs to the bacterial glucokinase family.

Its subcellular location is the membrane. The catalysed reaction is D-glucose + ATP = D-glucose 6-phosphate + ADP + H(+). The chain is Bifunctional protein glk (glk) from Burkholderia thailandensis (strain ATCC 700388 / DSM 13276 / CCUG 48851 / CIP 106301 / E264).